The following is a 787-amino-acid chain: Alpha-glucosidase 2 (787 aa).

Residues Asp-407 and Glu-410 contribute to the active site. Catalysis depends on Asp-484, which acts as the Proton donor.

This sequence belongs to the glycosyl hydrolase 31 family. Homohexamer.

The catalysed reaction is Hydrolysis of terminal, non-reducing (1-&gt;4)-linked alpha-D-glucose residues with release of alpha-D-glucose.. This chain is Alpha-glucosidase 2, found in Bacillus thermoamyloliquefaciens.